A 792-amino-acid chain; its full sequence is Phenylalanine--tRNA ligase beta subunit (792 aa).

The tRNA-binding domain maps to Ala-39–Arg-147. Residues Pro-400 to Ala-475 enclose the B5 domain. Mg(2+)-binding residues include Asp-453, Asp-459, Glu-462, and Glu-463. Residues Ser-698 to Arg-791 form the FDX-ACB domain.

The protein belongs to the phenylalanyl-tRNA synthetase beta subunit family. Type 1 subfamily. In terms of assembly, tetramer of two alpha and two beta subunits. Requires Mg(2+) as cofactor.

The protein localises to the cytoplasm. The catalysed reaction is tRNA(Phe) + L-phenylalanine + ATP = L-phenylalanyl-tRNA(Phe) + AMP + diphosphate + H(+). This is Phenylalanine--tRNA ligase beta subunit from Aromatoleum aromaticum (strain DSM 19018 / LMG 30748 / EbN1) (Azoarcus sp. (strain EbN1)).